The chain runs to 280 residues: DCN1-like protein 4 (280 aa).

The interval 37 to 71 is disordered; the sequence is GPESHGTACCSRAMPPRKKRRPTAGDDLSAKKSRQ. The region spanning 89–275 is the DCUN1 domain; that stretch reads FSSKRCLEWF…LLDEFVEWYK (187 aa).

In terms of assembly, may interact (via the DCUN1 domain) with unneddylated cullins.

It is found in the nucleus. Functionally, contributes to the neddylation of all cullins by transferring NEDD8 from N-terminally acetylated NEDD8-conjugating E2s enzyme to different cullin C-terminal domain-RBX complexes. The chain is DCN1-like protein 4 from Danio rerio (Zebrafish).